A 129-amino-acid chain; its full sequence is Small ribosomal subunit protein uS11 (129 aa).

The protein belongs to the universal ribosomal protein uS11 family. As to quaternary structure, part of the 30S ribosomal subunit. Interacts with proteins S7 and S18. Binds to IF-3.

Located on the platform of the 30S subunit, it bridges several disparate RNA helices of the 16S rRNA. Forms part of the Shine-Dalgarno cleft in the 70S ribosome. The polypeptide is Small ribosomal subunit protein uS11 (Lactobacillus delbrueckii subsp. bulgaricus (strain ATCC 11842 / DSM 20081 / BCRC 10696 / JCM 1002 / NBRC 13953 / NCIMB 11778 / NCTC 12712 / WDCM 00102 / Lb 14)).